A 580-amino-acid chain; its full sequence is XK-related protein 7 (580 aa).

Residues M1 to A22 show a composition bias toward low complexity. Residues M1–G28 form a disordered region. Transmembrane regions (helical) follow at residues W59–A79, Y89–F109, L260–Y280, V303–V323, L326–G346, W355–V375, V384–S404, and L415–Y435. The disordered stretch occupies residues T470 to P516.

Belongs to the XK family.

The protein resides in the cell membrane. The protein is XK-related protein 7 of Rattus norvegicus (Rat).